The sequence spans 113 residues: Dolichyl-diphosphooligosaccharide--protein glycosyltransferase subunit DAD1 (113 aa).

At serine 2 the chain carries N-acetylserine. Over 2–30 the chain is Cytoplasmic; sequence SASVLSVISRFLEEYLSATPQRLKLLDAY. The helical transmembrane segment at 31–51 threads the bilayer; that stretch reads LLYILLTGALQFGYCLLVGTF. Proline 52 is a topological domain (lumenal). A helical transmembrane segment spans residues 53–73; sequence FNSFLSGFISCVGSFILAVCL. The Cytoplasmic portion of the chain corresponds to 74–92; the sequence is RIQINPQNKADFQGISPER. Residues 93–113 form a helical membrane-spanning segment; sequence AFADFLFASTILHLVVMNFVG.

The protein belongs to the DAD/OST2 family. In terms of assembly, component of the oligosaccharyltransferase (OST) complex. OST exists in two different complex forms which contain common core subunits RPN1, RPN2, OST48, OST4, DAD1 and TMEM258, either STT3A or STT3B as catalytic subunits, and form-specific accessory subunits. STT3A complex assembly occurs through the formation of 3 subcomplexes. Subcomplex 1 contains RPN1 and TMEM258, subcomplex 2 contains the STT3A-specific subunits STT3A, DC2/OSTC, and KCP2 as well as the core subunit OST4, and subcomplex 3 contains RPN2, DAD1, and OST48. The STT3A complex can form stable complexes with the Sec61 complex or with both the Sec61 and TRAP complexes.

The protein localises to the endoplasmic reticulum membrane. It functions in the pathway protein modification; protein glycosylation. Subunit of the oligosaccharyl transferase (OST) complex that catalyzes the initial transfer of a defined glycan (Glc(3)Man(9)GlcNAc(2) in eukaryotes) from the lipid carrier dolichol-pyrophosphate to an asparagine residue within an Asn-X-Ser/Thr consensus motif in nascent polypeptide chains, the first step in protein N-glycosylation. N-glycosylation occurs cotranslationally and the complex associates with the Sec61 complex at the channel-forming translocon complex that mediates protein translocation across the endoplasmic reticulum (ER). All subunits are required for a maximal enzyme activity. The chain is Dolichyl-diphosphooligosaccharide--protein glycosyltransferase subunit DAD1 from Bos taurus (Bovine).